The following is a 411-amino-acid chain: Protein phosphatase 1 regulatory subunit 36 (411 aa).

Interacts with PPP1CA.

Its function is as follows. Inhibits phosphatase activity of protein phosphatase 1 (PP1) complexes. This is Protein phosphatase 1 regulatory subunit 36 (Ppp1r36) from Rattus norvegicus (Rat).